Consider the following 39-residue polypeptide: Photosystem II reaction center protein J (39 aa).

A helical membrane pass occupies residues 7–27 (IPLWLIGTIVGILVIGLIGIY).

Belongs to the PsbJ family. In terms of assembly, PSII is composed of 1 copy each of membrane proteins PsbA, PsbB, PsbC, PsbD, PsbE, PsbF, PsbH, PsbI, PsbJ, PsbK, PsbL, PsbM, PsbT, PsbX, PsbY, PsbZ, Psb30/Ycf12, at least 3 peripheral proteins of the oxygen-evolving complex and a large number of cofactors. It forms dimeric complexes.

The protein localises to the plastid. It is found in the chloroplast thylakoid membrane. Its function is as follows. One of the components of the core complex of photosystem II (PSII). PSII is a light-driven water:plastoquinone oxidoreductase that uses light energy to abstract electrons from H(2)O, generating O(2) and a proton gradient subsequently used for ATP formation. It consists of a core antenna complex that captures photons, and an electron transfer chain that converts photonic excitation into a charge separation. This is Photosystem II reaction center protein J from Welwitschia mirabilis (Tree tumbo).